Reading from the N-terminus, the 468-residue chain is 3-isopropylmalate dehydratase large subunit (468 aa).

Positions 349, 409, and 412 each coordinate [4Fe-4S] cluster.

It belongs to the aconitase/IPM isomerase family. LeuC type 1 subfamily. As to quaternary structure, heterodimer of LeuC and LeuD. [4Fe-4S] cluster serves as cofactor.

It carries out the reaction (2R,3S)-3-isopropylmalate = (2S)-2-isopropylmalate. It participates in amino-acid biosynthesis; L-leucine biosynthesis; L-leucine from 3-methyl-2-oxobutanoate: step 2/4. In terms of biological role, catalyzes the isomerization between 2-isopropylmalate and 3-isopropylmalate, via the formation of 2-isopropylmaleate. The polypeptide is 3-isopropylmalate dehydratase large subunit (Jannaschia sp. (strain CCS1)).